We begin with the raw amino-acid sequence, 387 residues long: ERBB-3 BINDING PROTEIN 1 (387 aa).

Necessary for nucleolar localization stretches follow at residues 1-49 (MSDD…IVDL) and 297-387 (LLQP…PMEG). The RNA-binding stretch occupies residues 47–55 (VDLCEKGDA). Residues 337 to 387 (LQPTKTTENEPEIKAWLALPTKTKKKGGGKKKKGKKGDKVEEASQAEPMEG) form a disordered region. Residues 356–373 (PTKTKKKGGGKKKKGKKG) are interaction with RNA. A compositionally biased stretch (basic residues) spans 358-372 (KTKKKGGGKKKKGKK). The Nuclear localization signal signature appears at 360 to 369 (KKKGGGKKKK).

This sequence belongs to the peptidase M24 family. In terms of assembly, component of a ribonucleoprotein complex. As to expression, expressed during tuberisation and in roots, nodes, internodes, petioles, leaves, stolons, tubers and sprouts.

It is found in the nucleus. Its function is as follows. Binds RNA. Associates with 28S, 18S and 5.8S mature rRNAs, several rRNA precursors and probably U3 small nucleolar RNA. May be involved in regulation of intermediate and late steps of rRNA processing. May be involved in ribosome assembly. Required for expression of cell cycle genes such as CYCD3-1, RNR2A and CDKB1-1. Promotes, in a dose- and auxin-dependent manner, organ growth by stimulating both cell proliferation and expansion, via the regulation of RBR1 levels. The polypeptide is ERBB-3 BINDING PROTEIN 1 (Solanum tuberosum (Potato)).